A 154-amino-acid chain; its full sequence is 6,7-dimethyl-8-ribityllumazine synthase (154 aa).

Residues phenylalanine 22, 56–58, and 80–82 contribute to the 5-amino-6-(D-ribitylamino)uracil site; these read SFE and AVI. 85–86 lines the (2S)-2-hydroxy-3-oxobutyl phosphate pocket; sequence ST. Histidine 88 serves as the catalytic Proton donor. Tyrosine 113 serves as a coordination point for 5-amino-6-(D-ribitylamino)uracil. Arginine 127 provides a ligand contact to (2S)-2-hydroxy-3-oxobutyl phosphate.

This sequence belongs to the DMRL synthase family. In terms of assembly, forms an icosahedral capsid composed of 60 subunits, arranged as a dodecamer of pentamers.

It catalyses the reaction (2S)-2-hydroxy-3-oxobutyl phosphate + 5-amino-6-(D-ribitylamino)uracil = 6,7-dimethyl-8-(1-D-ribityl)lumazine + phosphate + 2 H2O + H(+). It participates in cofactor biosynthesis; riboflavin biosynthesis; riboflavin from 2-hydroxy-3-oxobutyl phosphate and 5-amino-6-(D-ribitylamino)uracil: step 1/2. In terms of biological role, catalyzes the formation of 6,7-dimethyl-8-ribityllumazine by condensation of 5-amino-6-(D-ribitylamino)uracil with 3,4-dihydroxy-2-butanone 4-phosphate. This is the penultimate step in the biosynthesis of riboflavin. This chain is 6,7-dimethyl-8-ribityllumazine synthase, found in Persephonella marina (strain DSM 14350 / EX-H1).